A 318-amino-acid polypeptide reads, in one-letter code: MKDIILIYMICAPISMIGSLFIIITWLLYAKLKNSGSNFIFFQAISDFFFTSKYIITIIFYYINIPQFSDETSSTDTNPYCFSLGLFSQFFGQATIMWSYTMTVKVFHSYFEMKKKNNNNNIGSNNIGGGGGGNNSNKQNSIDKTLKWYHLFVWGFCLVNATIIGISKQYGPSSTGCWIVGANNPYRFFELVPLYFTITTSIIILILILVKMKKSKPSSLLPTESMRYNQQAREFKIQLMKFVLIFIIFWLPATVLRTLEYFGIEKTFFILLDAVSVSLQALANSLVWATSPQFLKLMKRKVVNKPNKQMEREYLINK.

The Extracellular portion of the chain corresponds to 1 to 3 (MKD). The chain crosses the membrane as a helical span at residues 4-24 (IILIYMICAPISMIGSLFIII). Over 25 to 38 (TWLLYAKLKNSGSN) the chain is Cytoplasmic. A helical transmembrane segment spans residues 39–59 (FIFFQAISDFFFTSKYIITII). Residues 60–83 (FYYINIPQFSDETSSTDTNPYCFS) lie on the Extracellular side of the membrane. C81 and C177 are disulfide-bonded. A helical transmembrane segment spans residues 84–104 (LGLFSQFFGQATIMWSYTMTV). Residues 105-145 (KVFHSYFEMKKKNNNNNIGSNNIGGGGGGNNSNKQNSIDKT) lie on the Cytoplasmic side of the membrane. Residues 146 to 166 (LKWYHLFVWGFCLVNATIIGI) traverse the membrane as a helical segment. The Extracellular segment spans residues 167-187 (SKQYGPSSTGCWIVGANNPYR). Residues 188–208 (FFELVPLYFTITTSIIILILI) traverse the membrane as a helical segment. Residues 209 to 234 (LVKMKKSKPSSLLPTESMRYNQQARE) lie on the Cytoplasmic side of the membrane. A helical membrane pass occupies residues 235–255 (FKIQLMKFVLIFIIFWLPATV). Residues 256–267 (LRTLEYFGIEKT) lie on the Extracellular side of the membrane. Residues 268–288 (FFILLDAVSVSLQALANSLVW) form a helical membrane-spanning segment. Residues 289 to 318 (ATSPQFLKLMKRKVVNKPNKQMEREYLINK) lie on the Cytoplasmic side of the membrane.

Belongs to the G-protein coupled receptor 5 family.

The protein resides in the membrane. In terms of biological role, receptor for cAMP. The chain is Cyclic AMP receptor-like protein F (crlF) from Dictyostelium discoideum (Social amoeba).